A 199-amino-acid chain; its full sequence is Copper transport protein CTR4 (199 aa).

The next 2 helical transmembrane spans lie at 62–82 and 152–172; these read KGMFAGSIIGIFFLCVLIELI and AFFVMLLGMYFNVIVLIFIFL.

The protein belongs to the copper transporter (Ctr) (TC 1.A.56) family. SLC31A subfamily.

It localises to the membrane. Its function is as follows. Required for high affinity copper (probably reduced Cu I) transport into the cell. Plays a role in fungal pathogenesis during host infection. The polypeptide is Copper transport protein CTR4 (Cryptococcus neoformans var. grubii serotype A (strain H99 / ATCC 208821 / CBS 10515 / FGSC 9487) (Filobasidiella neoformans var. grubii)).